We begin with the raw amino-acid sequence, 236 residues long: Glucosamine-6-phosphate deaminase (236 aa).

The active-site Proton acceptor; for enolization step is the Asp62. Asn128 functions as the For ring-opening step in the catalytic mechanism. Catalysis depends on His130, which acts as the Proton acceptor; for ring-opening step. The active-site For ring-opening step is Glu135.

It belongs to the glucosamine/galactosamine-6-phosphate isomerase family. NagB subfamily.

The catalysed reaction is alpha-D-glucosamine 6-phosphate + H2O = beta-D-fructose 6-phosphate + NH4(+). It functions in the pathway amino-sugar metabolism; N-acetylneuraminate degradation; D-fructose 6-phosphate from N-acetylneuraminate: step 5/5. Its function is as follows. Catalyzes the reversible isomerization-deamination of glucosamine 6-phosphate (GlcN6P) to form fructose 6-phosphate (Fru6P) and ammonium ion. This chain is Glucosamine-6-phosphate deaminase, found in Pediococcus pentosaceus (strain ATCC 25745 / CCUG 21536 / LMG 10740 / 183-1w).